A 945-amino-acid polypeptide reads, in one-letter code: Bifunctional glutamine synthetase adenylyltransferase/adenylyl-removing enzyme (945 aa).

The interval 1 to 440 (MMPLSPQLQQ…VFNELIGDDE (440 aa)) is adenylyl removase. The adenylyl transferase stretch occupies residues 449 to 945 (AEYWRELWQD…SASWQKWLMA (497 aa)).

This sequence belongs to the GlnE family. Requires Mg(2+) as cofactor.

It catalyses the reaction [glutamine synthetase]-O(4)-(5'-adenylyl)-L-tyrosine + phosphate = [glutamine synthetase]-L-tyrosine + ADP. The catalysed reaction is [glutamine synthetase]-L-tyrosine + ATP = [glutamine synthetase]-O(4)-(5'-adenylyl)-L-tyrosine + diphosphate. Functionally, involved in the regulation of glutamine synthetase GlnA, a key enzyme in the process to assimilate ammonia. When cellular nitrogen levels are high, the C-terminal adenylyl transferase (AT) inactivates GlnA by covalent transfer of an adenylyl group from ATP to specific tyrosine residue of GlnA, thus reducing its activity. Conversely, when nitrogen levels are low, the N-terminal adenylyl removase (AR) activates GlnA by removing the adenylyl group by phosphorolysis, increasing its activity. The regulatory region of GlnE binds the signal transduction protein PII (GlnB) which indicates the nitrogen status of the cell. The protein is Bifunctional glutamine synthetase adenylyltransferase/adenylyl-removing enzyme of Klebsiella pneumoniae subsp. pneumoniae (strain ATCC 700721 / MGH 78578).